The primary structure comprises 221 residues: Uracil-DNA glycosylase (221 aa).

Residue Asp65 is the Proton acceptor of the active site.

The protein belongs to the uracil-DNA glycosylase (UDG) superfamily. UNG family.

The protein localises to the cytoplasm. The catalysed reaction is Hydrolyzes single-stranded DNA or mismatched double-stranded DNA and polynucleotides, releasing free uracil.. In terms of biological role, excises uracil residues from the DNA which can arise as a result of misincorporation of dUMP residues by DNA polymerase or due to deamination of cytosine. This is Uracil-DNA glycosylase from Christiangramia forsetii (strain DSM 17595 / CGMCC 1.15422 / KT0803) (Gramella forsetii).